A 79-amino-acid polypeptide reads, in one-letter code: Large ribosomal subunit protein bL31 (79 aa).

Belongs to the bacterial ribosomal protein bL31 family. Type A subfamily. In terms of assembly, part of the 50S ribosomal subunit.

Its function is as follows. Binds the 23S rRNA. The protein is Large ribosomal subunit protein bL31 of Nostoc sp. (strain PCC 7120 / SAG 25.82 / UTEX 2576).